The primary structure comprises 382 residues: D-galactonate dehydratase (382 aa).

Asp183 provides a ligand contact to Mg(2+). The Proton donor role is filled by His185. The Mg(2+) site is built by Glu209 and Glu235. His285 acts as the Proton acceptor in catalysis.

Belongs to the mandelate racemase/muconate lactonizing enzyme family. GalD subfamily. Requires Mg(2+) as cofactor.

The enzyme catalyses D-galactonate = 2-dehydro-3-deoxy-D-galactonate + H2O. Its pathway is carbohydrate acid metabolism; D-galactonate degradation; D-glyceraldehyde 3-phosphate and pyruvate from D-galactonate: step 1/3. Catalyzes the dehydration of D-galactonate to 2-keto-3-deoxy-D-galactonate. The sequence is that of D-galactonate dehydratase from Escherichia coli O45:K1 (strain S88 / ExPEC).